A 529-amino-acid chain; its full sequence is MSSNLGKEKDCKEKDPKVPSSKEREKESKASGGFGKESKEKEPKTKGKDAKDGKKDSSSTQPGVAFSVDNTIKRPNPATGTRKKSSNAEVIKELNKCREENSMRLDLAKRSIHMLPSAVKELTQLTELYLYSNKLQSLPAEVGCLVNLVTLALSENSLTSLPDSLDNLKKLRMLDLRHNKLREIPSVVYRLTSLATLYLRFNRITTVEKDIKTLSKLTMLSIRENKIKQLPAEIGELCNLITLDVAHNQLEHLPEEIGSCTQITNLDLQHNELLDLPETIGNLSSLSRLGLRYNRLSAIPKSLAKCSELDELNLENNNISTLPEGLLSSLVKLTSLTLARNCFQSYPVGGPSQFSTIYSLNMEHNRINKIPFGIFSRAKVLSKLNMKDNQLTSLPLDFGTWTSMVELNLATNQLTKIPEDVSGLVSLEVLILSNNLLKKLPHGIGNLRKLRELDLEENKLESLPNEIAYLKDLQKLVLTNNQLTTLPRGIGHLTNLTHLGLGENLLTHLPEEIGKILFFFFFNVSFLFV.

Basic and acidic residues-rich tracts occupy residues 1-29 (MSSN…KESK) and 36-57 (KESK…KKDS). The disordered stretch occupies residues 1-87 (MSSNLGKEKD…ATGTRKKSSN (87 aa)). LRR repeat units follow at residues 99–122 (EENS…VKEL), 123–145 (TQLT…VGCL), 146–168 (VNLV…LDNL), 169–191 (KKLR…VYRL), 193–214 (SLAT…IKTL), 215–237 (SKLT…IGEL), 239–260 (NLIT…IGSC), 262–283 (QITN…IGNL), 284–306 (SSLS…LAKC), 307–329 (SELD…LLSS), 331–353 (VKLT…GPSQ), 354–377 (FSTI…IFSR), 379–400 (KVLS…DFGT), 401–424 (WTSM…VSGL), 425–447 (VSLE…IGNL), 448–471 (RKLR…AYLK), 473–493 (LQKL…IGHL), and 494–516 (TNLT…IGKI).

Belongs to the SHOC2 family.

It localises to the cytoplasm. Its subcellular location is the nucleus. Its function is as follows. Core component of the SHOC2-MRAS-PP1c (SMP) holophosphatase complex that regulates activation of the MAPK pathway. Acts as a scaffolding protein in the SMP complex. The SMP complex specifically dephosphorylates the inhibitory phosphorylation Raf kinases, stimulating their kinase activities. The SMP complex enhances the dephosphorylation activity and substrate specificity of PP1c. This is Leucine-rich repeat protein SHOC-2 (SHOC2) from Gallus gallus (Chicken).